Here is a 926-residue protein sequence, read N- to C-terminus: Neurofilament medium polypeptide (926 aa).

Over residues M1–N10 the composition is skewed to polar residues. Disordered regions lie at residues M1–S51 and Q79–K102. The residue at position 2 (S2) is an N-acetylserine. Positions S2–Q104 are head. Over residues R21–S44 the composition is skewed to low complexity. S30 is modified (phosphoserine). R42 bears the Omega-N-methylarginine mark. O-linked (GlcNAc) threonine glycosylation is present at T47. Position 99 is a phosphoserine (S99). Residues E101–F412 form the IF rod domain. Residues I105–L136 form a coil 1A region. Positions R137 to A149 are linker 1. Residues Y150 to Q248 are coil 1B. A Phosphoserine modification is found at S226. The linker 12 stretch occupies residues I249–D265. The tract at residues I266–Q287 is coil 2A. A linker 2 region spans residues A288–W291. Positions F292–F412 are coil 2B. Position 320 is a phosphotyrosine (Y320). 5 positions are modified to phosphoserine: S346, S418, S430, S468, and S484. Residues S413–D926 form a tail region. Residues E487–E860 are disordered. Over residues K490 to V507 the composition is skewed to acidic residues. Repeat unit 1 spans residues K512 to K516. Positions K512 to E698 are 17 X 5 AA approximate tandem repeats of K-S-P-[TVEA]-[AKETP]. Phosphoserine is present on S513. Residues K523 to E543 show a composition bias toward acidic residues. Residues A544–K563 are compositionally biased toward basic and acidic residues. 4 positions are modified to phosphoserine: S547, S555, S560, and S561. The span at E564–A584 shows a compositional bias: acidic residues. Phosphothreonine is present on T574. The segment covering A585–K619 has biased composition (basic and acidic residues). 16 tandem repeats follow at residues K619–A623, K624–T628, K629–A633, K634–A638, K639–A643, K644–A648, K649–A653, K654–A658, K659–A663, K664–A668, K669–A673, K674–A678, K679–A683, K684–A688, K689–P693, and K694–E698. T628 bears the Phosphothreonine mark. A phosphoserine mark is found at S630, S635, and S640. T647 is modified (phosphothreonine). Phosphoserine occurs at positions 650 and 655. Phosphoserine occurs at positions 665 and 670. Residues A673 to A692 show a composition bias toward low complexity. At T677 the chain carries Phosphothreonine. S680, S685, S690, S695, S727, S751, S757, S771, S831, and S847 each carry phosphoserine. Basic and acidic residues-rich tracts occupy residues P696–P764, S771–I811, and T826–G838. The span at G849–E860 shows a compositional bias: basic and acidic residues.

Forms heterodimers with NEFL; which can further hetero-oligomerize (in vitro). Forms heterodimers with INA (in vitro). Post-translationally, phosphorylated on a number of serine residues in the repeated K-S-P tripeptide motif. Phosphorylation of NFH may result in the formation of interfilament cross-links that are important in the maintenance of axonal caliber. Phosphorylation seems to play a major role in the functioning of the larger neurofilament polypeptides (NF-M and NF-H), the levels of phosphorylation being altered developmentally and coincidentally with a change in the neurofilament function. In terms of processing, phosphorylated in the head and rod regions by the PKC kinase PKN1, leading to the inhibition of polymerization.

The protein resides in the cytoplasm. Its subcellular location is the cytoskeleton. The protein localises to the cell projection. It is found in the axon. Neurofilaments usually contain three intermediate filament proteins: NEFL, NEFM, and NEFH which are involved in the maintenance of neuronal caliber. May additionally cooperate with the neuronal intermediate filament proteins PRPH and INA to form neuronal filamentous networks. The chain is Neurofilament medium polypeptide (NEFM) from Bos taurus (Bovine).